A 564-amino-acid polypeptide reads, in one-letter code: 3beta-hydroxysteroid-dehydrogenase/decarboxylase isoform 2 (564 aa).

16 to 21 (GGRGFA) provides a ligand contact to NAD(+). Asparagine 146 and asparagine 158 each carry an N-linked (GlcNAc...) asparagine glycan. NAD(+)-binding residues include tyrosine 161 and lysine 165. Residue lysine 165 is the Proton donor of the active site. The region spanning 384-564 (VADTLLWKDL…EKLFGSKKHD (181 aa)) is the Reticulon domain. The next 2 membrane-spanning stretches (helical) occupy residues 398-418 (IAIFILISIYYNFVATGSTVV) and 424-444 (ALLVASVFLFLHGILPEKIFG). Asparagine 474 carries N-linked (GlcNAc...) asparagine glycosylation. Helical transmembrane passes span 486-506 (GNDWSFFFKVVFVLLALSLAG) and 507-527 (AISLHSIFVIGLPIAFLAFLV).

This sequence belongs to the 3-beta-HSD family.

Its subcellular location is the endoplasmic reticulum membrane. The catalysed reaction is a 3beta-hydroxysteroid-4alpha-carboxylate + NAD(+) = a 3-oxosteroid + CO2 + NADH. It carries out the reaction 4alpha-carboxy-4beta,14alpha-dimethyl-9beta,19-cyclo-5alpha-ergost-24(24(1))-en-3beta-ol + NAD(+) = cycloeucalenone + CO2 + NADH. It participates in steroid biosynthesis; zymosterol biosynthesis; zymosterol from lanosterol: step 4/6. In terms of biological role, 3beta-hydroxysteroid-dehydrogenase/decarboxylase involved in sterol synthesis. Catalyzes the formation of 3-oxosteroids from 3beta-hydroxysteroids-4alpha-carboxylate. Involved in the regulation of inflorescence internodes and leaves growth, probably by affecting auxin transporter activity possibly by altering sterol composition in the membranes. This is 3beta-hydroxysteroid-dehydrogenase/decarboxylase isoform 2 from Arabidopsis thaliana (Mouse-ear cress).